The primary structure comprises 119 residues: Large ribosomal subunit protein bL20 (119 aa).

Belongs to the bacterial ribosomal protein bL20 family.

In terms of biological role, binds directly to 23S ribosomal RNA and is necessary for the in vitro assembly process of the 50S ribosomal subunit. It is not involved in the protein synthesizing functions of that subunit. The protein is Large ribosomal subunit protein bL20 of Thermoanaerobacter sp. (strain X514).